We begin with the raw amino-acid sequence, 259 residues long: Peroxisomal membrane protein 11B (259 aa).

Residue Lys43 is modified to N6-acetyllysine. Positions 157–176 are disordered; sequence LKGSGGGVPGGSETGGLGGP. Residues 159 to 176 show a composition bias toward gly residues; that stretch reads GSGGGVPGGSETGGLGGP. The tract at residues 211–259 is interaction with PEX19, PEX11G and FIS1 and peroxisome targeting; the sequence is VVRNACDLFIPLDKLGLWRCGPGIVGLCGLVSSILSILTLIYPWLRLKP. The helical transmembrane segment at 233-255 threads the bilayer; the sequence is GIVGLCGLVSSILSILTLIYPWL.

This sequence belongs to the peroxin-11 family. As to quaternary structure, homodimer. Heterodimer with PEX11G. Interacts with PEX19. Interacts with FIS1.

Its subcellular location is the peroxisome membrane. Its function is as follows. Involved in peroxisomal proliferation. May regulate peroxisome division by recruiting the dynamin-related GTPase DNM1L to the peroxisomal membrane. Promotes membrane protrusion and elongation on the peroxisomal surface. This is Peroxisomal membrane protein 11B (PEX11B) from Homo sapiens (Human).